A 379-amino-acid polypeptide reads, in one-letter code: Early boundary activity protein 3 (379 aa).

As to quaternary structure, the heterotrimeric Elba complex consists of Elba1, Elba2 and Elba3.

The protein localises to the nucleus. In terms of biological role, the heterotrimeric Elba complex is required for chromatin domain boundary function during early embryogenesis. It binds to a 8-bp sequence 5'-CCAATAAG-3' in the Fab-7 insulator or boundary element in the bithorax complex and contributes to its insulator or boundary activity. Elba3 lacks DNA-binding activity and plays the role of an adapter protein, bringing Elba1 and 2 together, thereby establishing a complex that recognizes the asymmetric sequence motif through the BEN domains of Elba1 and 2. The sequence is that of Early boundary activity protein 3 from Drosophila melanogaster (Fruit fly).